The following is a 425-amino-acid chain: MLDLKRIRTDFDTVAAKLATRGVDAATLNQMKTIDKERRDLLVKVEELKAERNTVSAEIAQAKRNKENADDKIAAMQKLSAEVKNLDATLAELDAKLTEFTTTLPNIPHESVPVGADEDENVEVRRWGTPRQFDFEAKAHWDLGEDLDILDWERGAKVTGARFLFYKGLGARLERAIYNFMLDEHGKEGYTEVITPYMVNHDSMFGTGQYPKFKEDTFELSDTNFVLIPTAEVPLTNYYRDEILDGKELPIYFTAMSPSFRSEAGSAGRDTRGLIRLHQFHKVEMVKFAKPEESYEELEKMTANAENILQKLNLPYRVVALCTGDMGFSAAKTYDLEVWIPAQNTYREISSCSNTEDFQARRAQIRYRDEADGKVKLLHTLNGSGLAVGRTVAAILENYQNEDGSVTIPEVLRPYMGGLEVIAPK.

230–232 (TAE) provides a ligand contact to L-serine. ATP is bound at residue 261 to 263 (RSE). E284 lines the L-serine pocket. Position 348 to 351 (348 to 351 (EISS)) interacts with ATP. S384 lines the L-serine pocket.

This sequence belongs to the class-II aminoacyl-tRNA synthetase family. Type-1 seryl-tRNA synthetase subfamily. In terms of assembly, homodimer. The tRNA molecule binds across the dimer.

It is found in the cytoplasm. The enzyme catalyses tRNA(Ser) + L-serine + ATP = L-seryl-tRNA(Ser) + AMP + diphosphate + H(+). The catalysed reaction is tRNA(Sec) + L-serine + ATP = L-seryl-tRNA(Sec) + AMP + diphosphate + H(+). The protein operates within aminoacyl-tRNA biosynthesis; selenocysteinyl-tRNA(Sec) biosynthesis; L-seryl-tRNA(Sec) from L-serine and tRNA(Sec): step 1/1. Catalyzes the attachment of serine to tRNA(Ser). Is also able to aminoacylate tRNA(Sec) with serine, to form the misacylated tRNA L-seryl-tRNA(Sec), which will be further converted into selenocysteinyl-tRNA(Sec). This is Serine--tRNA ligase from Streptococcus gordonii (strain Challis / ATCC 35105 / BCRC 15272 / CH1 / DL1 / V288).